The following is a 138-amino-acid chain: Small ribosomal subunit protein uS11c (138 aa).

It belongs to the universal ribosomal protein uS11 family. As to quaternary structure, part of the 30S ribosomal subunit.

It is found in the plastid. The protein localises to the chloroplast. The sequence is that of Small ribosomal subunit protein uS11c from Illicium oligandrum (Star anise).